The chain runs to 299 residues: Protease HtpX homolog (299 aa).

The next 2 helical transmembrane spans lie at 14–34 (ILVMAGFVFLVALIGAAVGYL) and 39–59 (ATGGVIIALVIAVIYVSIMVG). Position 144 (His-144) interacts with Zn(2+). The active site involves Glu-145. His-148 serves as a coordination point for Zn(2+). Helical transmembrane passes span 159 to 179 (IALALTAAISLLVNFAGNFMW) and 196 to 216 (VFAIIGSILLIILAPLAATMV). Position 225 (Glu-225) interacts with Zn(2+).

Belongs to the peptidase M48B family. It depends on Zn(2+) as a cofactor.

The protein resides in the cell membrane. This is Protease HtpX homolog from Limosilactobacillus fermentum (strain NBRC 3956 / LMG 18251) (Lactobacillus fermentum).